Consider the following 373-residue polypeptide: MAKSHLLPWLLLLPILCGPGTAAAITYSLACAQGPEFWCQSLEQALQCRALGHCLQEVWGHVEADDLCQECENISRLLTKMAKEAIFQDSVRKFLEQECDVLPLKLLAPLCRHLLDTYFPLIIEHFQSHMNPKFICQHVGLCKPRHPEPGKGPEPWGPLLDKLALPLLPGVPQAKPGPQTQDLSEQLFPIPIPYCWLCRTLIKRIQAVIPKGVLAMTVAQVCHVVPLLVGGICQCLVERYSVILLDTLLGRMLPQLVCGLVLRCSSEDSAGPALPALGSVPGEWLPQDSDCQLCMFVTTQAGNSSEQATPQAMRQACLGTWLDRQKCERFVEENAPRLQTLVSSGWDAHMACQALGTCAAPFSPLQCVHSPHF.

Positions methionine 1–alanine 22 are cleaved as a signal peptide. The propeptide occupies alanine 23–leucine 187. The Saposin A-type domain maps to alanine 24–alanine 64. 3 Saposin B-type domains span residues alanine 64–histidine 146, proline 191–aspartate 268, and glutamine 287–phenylalanine 362. 9 disulfides stabilise this stretch: cysteine 68-cysteine 142, cysteine 71-cysteine 136, cysteine 99-cysteine 111, cysteine 195-cysteine 264, cysteine 198-cysteine 258, cysteine 222-cysteine 233, cysteine 291-cysteine 358, cysteine 294-cysteine 352, and cysteine 317-cysteine 327. Asparagine 73 carries an N-linked (GlcNAc...) asparagine glycan. A propeptide spanning residues glutamate 267–phenylalanine 373 is cleaved from the precursor. An N-linked (GlcNAc...) asparagine glycan is attached at asparagine 303.

In terms of assembly, homodimer; disulfide-linked.

Its subcellular location is the secreted. It is found in the extracellular space. It localises to the surface film. In terms of biological role, pulmonary surfactant-associated proteins promote alveolar stability by lowering the surface tension at the air-liquid interface in the peripheral air spaces. SP-B increases the collapse pressure of palmitic acid to nearly 70 millinewtons per meter. The polypeptide is Pulmonary surfactant-associated protein B (SFTPB) (Bos taurus (Bovine)).